The chain runs to 157 residues: Putative pre-16S rRNA nuclease (157 aa).

It belongs to the YqgF nuclease family.

It localises to the cytoplasm. Could be a nuclease involved in processing of the 5'-end of pre-16S rRNA. The polypeptide is Putative pre-16S rRNA nuclease (Anaplasma marginale (strain St. Maries)).